The sequence spans 327 residues: Thiamine thiazole synthase (327 aa).

Residues Cys-86, Glu-107 to Ala-108, Gly-115, and Val-182 each bind substrate. Cys-216 carries the 2,3-didehydroalanine (Cys) modification. Substrate is bound by residues Asp-218, His-233, Met-285, and Arg-295–Gly-297.

It belongs to the THI4 family. As to quaternary structure, homooctamer. Fe cation serves as cofactor. During the catalytic reaction, a sulfide is transferred from Cys-216 to a reaction intermediate, generating a dehydroalanine residue.

The protein resides in the cytoplasm. The protein localises to the nucleus. It carries out the reaction [ADP-thiazole synthase]-L-cysteine + glycine + NAD(+) = [ADP-thiazole synthase]-dehydroalanine + ADP-5-ethyl-4-methylthiazole-2-carboxylate + nicotinamide + 3 H2O + 2 H(+). Its function is as follows. Involved in biosynthesis of the thiamine precursor thiazole. Catalyzes the conversion of NAD and glycine to adenosine diphosphate 5-(2-hydroxyethyl)-4-methylthiazole-2-carboxylic acid (ADT), an adenylated thiazole intermediate. The reaction includes an iron-dependent sulfide transfer from a conserved cysteine residue of the protein to a thiazole intermediate. The enzyme can only undergo a single turnover, which suggests it is a suicide enzyme. May have additional roles in adaptation to various stress conditions and in DNA damage tolerance. The protein is Thiamine thiazole synthase of Aspergillus oryzae (strain ATCC 42149 / RIB 40) (Yellow koji mold).